A 108-amino-acid polypeptide reads, in one-letter code: Tetrahydromethanopterin S-methyltransferase subunit B (108 aa).

A helical membrane pass occupies residues 77–99 (FQGMFFGFWVTMAVLVLVTILAV).

This sequence belongs to the MtrB family. As to quaternary structure, the complex is composed of 8 subunits; MtrA, MtrB, MtrC, MtrD, MtrE, MtrF, MtrG and MtrH.

Its subcellular location is the cell membrane. The enzyme catalyses 5-methyl-5,6,7,8-tetrahydromethanopterin + coenzyme M + 2 Na(+)(in) = 5,6,7,8-tetrahydromethanopterin + methyl-coenzyme M + 2 Na(+)(out). It participates in one-carbon metabolism; methanogenesis from CO(2); methyl-coenzyme M from 5,10-methylene-5,6,7,8-tetrahydromethanopterin: step 2/2. Functionally, part of a complex that catalyzes the formation of methyl-coenzyme M and tetrahydromethanopterin from coenzyme M and methyl-tetrahydromethanopterin. This is an energy-conserving, sodium-ion translocating step. This chain is Tetrahydromethanopterin S-methyltransferase subunit B, found in Methanococcus maripaludis (strain DSM 14266 / JCM 13030 / NBRC 101832 / S2 / LL).